Reading from the N-terminus, the 445-residue chain is MGSSADTETAMIIATPASNHNNPATNGGDANQNHTSGAILALTNSESDASKKRRMGVLPLEVGTRVMCQWRDGKYHPVKVIERRKNYNGGHNDYEYYVHYTEFNRRLDEWIKLEQLDLDSVECALDEKVEDKVTSLKMTRHQKRKIDETHVEGHEELDAASLREHEEFTKVKNIATIELGKYEIETWYFSPFPPEYNDCVKLFFCEFCLSFMKRKEQLQRHMRKCDLKHPPGDEIYRSSTLSMFEVDGKKNKVYAQNLCYLAKLFLDHKTLYYDVDLFLFYILCECDDRGCHMVGYFSKEKHSEEAYNLACILTLPPYQRKGYGKFLIAFSYELSKKEGKVGTPERPLSDLGLVSYRGYWTRILLDILKKHKGNISIKELSDMTAIKAEDILSTLQSLELIQYRKGQHVICADPKVLDRHLKAAGRGGLDVDVSKMIWTPYKEQS.

A Tudor-knot domain is found at 60–118 (LEVGTRVMCQWRDGKYHPVKVIERRKNYNGGHNDYEYYVHYTEFNRRLDEWIKLEQLDL). One can recognise an MYST-type HAT domain in the interval 169–440 (TKVKNIATIE…VDVSKMIWTP (272 aa)). Residues 202–227 (LFFCEFCLSFMKRKEQLQRHMRKCDL) form a C2HC MYST-type zinc finger. N6-acetyllysine; by autocatalysis is present on lysine 269. Acetyl-CoA-binding positions include 312 to 314 (ILT) and 319 to 325 (QRKGYGK). Glutamate 345 (proton donor/acceptor) is an active-site residue. Serine 349 provides a ligand contact to acetyl-CoA.

Belongs to the MYST (SAS/MOZ) family. As to quaternary structure, interacts with MRG1 and MRG2. Component of the NuA4 histone acetyltransferase complex. Post-translationally, autoacetylation at Lys-269 is required for proper function. Expressed in cotyledons, leaves, stems, roots and, at higher levels in developing flowers, particularly in the anthers and gynoecia. Constitutively expressed in all tissues, predominantly in shoot apical meristem.

It localises to the nucleus. It catalyses the reaction L-lysyl-[protein] + acetyl-CoA = N(6)-acetyl-L-lysyl-[protein] + CoA + H(+). Its function is as follows. Histone acetyltransferase which may be involved in transcriptional activation. Acetylates 'Lys-5' of histone H4 (H4K5ac). Essential for gametophyte development. Involved in DNA repair after UV-B exposure. Negative regulator of flowering controlling the H4K5ac levels in the FLC chromatin. This is Histone acetyltransferase of the MYST family 1 from Arabidopsis thaliana (Mouse-ear cress).